The chain runs to 505 residues: Cytochrome P450 76A2 (505 aa).

C448 is a heme binding site.

Belongs to the cytochrome P450 family. Requires heme as cofactor.

The sequence is that of Cytochrome P450 76A2 (CYP76A2) from Solanum melongena (Eggplant).